A 570-amino-acid chain; its full sequence is Proline--tRNA ligase (570 aa).

It belongs to the class-II aminoacyl-tRNA synthetase family. ProS type 1 subfamily. Homodimer.

It is found in the cytoplasm. The catalysed reaction is tRNA(Pro) + L-proline + ATP = L-prolyl-tRNA(Pro) + AMP + diphosphate. Functionally, catalyzes the attachment of proline to tRNA(Pro) in a two-step reaction: proline is first activated by ATP to form Pro-AMP and then transferred to the acceptor end of tRNA(Pro). As ProRS can inadvertently accommodate and process non-cognate amino acids such as alanine and cysteine, to avoid such errors it has two additional distinct editing activities against alanine. One activity is designated as 'pretransfer' editing and involves the tRNA(Pro)-independent hydrolysis of activated Ala-AMP. The other activity is designated 'posttransfer' editing and involves deacylation of mischarged Ala-tRNA(Pro). The misacylated Cys-tRNA(Pro) is not edited by ProRS. The protein is Proline--tRNA ligase of Syntrophomonas wolfei subsp. wolfei (strain DSM 2245B / Goettingen).